The following is a 342-amino-acid chain: Nicotinate-nucleotide--dimethylbenzimidazole phosphoribosyltransferase (342 aa).

Glu-311 functions as the Proton acceptor in the catalytic mechanism.

The protein belongs to the CobT family.

It carries out the reaction 5,6-dimethylbenzimidazole + nicotinate beta-D-ribonucleotide = alpha-ribazole 5'-phosphate + nicotinate + H(+). The protein operates within nucleoside biosynthesis; alpha-ribazole biosynthesis; alpha-ribazole from 5,6-dimethylbenzimidazole: step 1/2. Its function is as follows. Catalyzes the synthesis of alpha-ribazole-5'-phosphate from nicotinate mononucleotide (NAMN) and 5,6-dimethylbenzimidazole (DMB). The protein is Nicotinate-nucleotide--dimethylbenzimidazole phosphoribosyltransferase of Shewanella piezotolerans (strain WP3 / JCM 13877).